The following is a 312-amino-acid chain: Pre-mRNA-splicing factor 38A (312 aa).

Positions 1–179 are N-terminal protein interaction domain; it reads MANRTVKDAH…VLEETEQLDP (179 aa). The tract at residues 180-312 is disordered; the sequence is RVSALEEDMD…SHKKSRRGNE (133 aa). Over residues 184 to 201 the composition is skewed to acidic residues; the sequence is LEEDMDDVESSEEEEDED. The span at 202–223 shows a compositional bias: basic and acidic residues; the sequence is EKGRDPSPEHHRRNYRDLDRPR. Composition is skewed to basic residues over residues 224–294 and 301–312; these read RSPS…RSHS and KKSHKKSRRGNE.

This sequence belongs to the PRP38 family. As to quaternary structure, component of the spliceosome B complex.

The protein localises to the nucleus. Functionally, involved in pre-mRNA splicing as a component of the spliceosome. In Xenopus tropicalis (Western clawed frog), this protein is Pre-mRNA-splicing factor 38A (prpf38a).